The sequence spans 454 residues: Phosphoglucosamine mutase (454 aa).

Catalysis depends on Ser-104, which acts as the Phosphoserine intermediate. 4 residues coordinate Mg(2+): Ser-104, Asp-247, Asp-249, and Asp-251. A Phosphoserine modification is found at Ser-104.

Belongs to the phosphohexose mutase family. It depends on Mg(2+) as a cofactor. Activated by phosphorylation.

It catalyses the reaction alpha-D-glucosamine 1-phosphate = D-glucosamine 6-phosphate. Functionally, catalyzes the conversion of glucosamine-6-phosphate to glucosamine-1-phosphate. This chain is Phosphoglucosamine mutase, found in Bifidobacterium animalis subsp. lactis (strain AD011).